Reading from the N-terminus, the 87-residue chain is Small ribosomal subunit protein bS18 (87 aa).

Over residues Met1 to Arg10 the composition is skewed to basic and acidic residues. Residues Met1–Ala23 are disordered.

The protein belongs to the bacterial ribosomal protein bS18 family. Part of the 30S ribosomal subunit. Forms a tight heterodimer with protein bS6.

Its function is as follows. Binds as a heterodimer with protein bS6 to the central domain of the 16S rRNA, where it helps stabilize the platform of the 30S subunit. The chain is Small ribosomal subunit protein bS18 from Clavibacter michiganensis subsp. michiganensis (strain NCPPB 382).